A 316-amino-acid polypeptide reads, in one-letter code: MEGPPPSKRPCGLPPGVRLVVPAAAAASASNAATAAAAAAPAGAGAGASKPARPSAAARPAKGTPAASAATTATGADASAPPPDPGAPTWDAFAAEFDVAPSWRALLEPEIAKPYARLLLAEYRGRCLTEEVLPAREDVFAWTRLTAPEDVKVVIIGQDPYHGPGQAHGLAFSVRRGVPIPPSLANIFAAVRATYPTLPAPAHGCLEAWARRGVLLLNTTLTVRRGVPGSHAPLGWARLVRAVVQRLCETRPKLVFMLWGAHAQKACAPDPRRHKVLTFSHPSPLARTPFRTCPHFGEANAYLVQTGRAPVDWSVD.

Residues 36–79 are compositionally biased toward low complexity; that stretch reads AAAAAPAGAGAGASKPARPSAAARPAKGTPAASAATTATGADAS. A disordered region spans residues 36–91; that stretch reads AAAAAPAGAGAGASKPARPSAAARPAKGTPAASAATTATGADASAPPPDPGAPTWD. The active-site Proton acceptor is D159.

Belongs to the uracil-DNA glycosylase (UDG) superfamily. UNG family.

The protein localises to the host nucleus. The catalysed reaction is Hydrolyzes single-stranded DNA or mismatched double-stranded DNA and polynucleotides, releasing free uracil.. Excises uracil residues from the DNA which can arise as a result of misincorporation of dUMP residues by DNA polymerase or deamination of cytosines. Therefore may reduce deleterious uracil incorporation into the viral genome, particularly in terminally differentiated cells which lack DNA repair enzymes. The sequence is that of Uracil-DNA glycosylase (UL2) from Sus scrofa (Pig).